A 475-amino-acid chain; its full sequence is GDP-fucose protein O-fucosyltransferase 3 (475 aa).

The Cytoplasmic portion of the chain corresponds to 1-8; it reads MVRMRRKR. A helical; Signal-anchor for type II membrane protein membrane pass occupies residues 9–29; it reads LWASCICFAAFFFLLVTLQVI. Topologically, residues 30–475 are lumenal; that stretch reads TELGNSENKA…QEFWMLVFKQ (446 aa). Asparagine 107, asparagine 165, and asparagine 315 each carry an N-linked (GlcNAc...) asparagine glycan. An intrachain disulfide couples cysteine 386 to cysteine 389. An N-linked (GlcNAc...) asparagine glycan is attached at asparagine 462.

The protein belongs to the glycosyltransferase 10 family.

The protein localises to the endoplasmic reticulum membrane. It carries out the reaction L-threonyl-[protein] + GDP-beta-L-fucose = 3-O-(alpha-L-fucosyl)-L-threonyl-[protein] + GDP + H(+). The enzyme catalyses L-seryl-[protein] + GDP-beta-L-fucose = 3-O-(alpha-L-fucosyl)-L-seryl-[protein] + GDP + H(+). The protein operates within protein modification; protein glycosylation. Protein O-fucosyltransferase that specifically catalyzes O-fucosylation of serine or threonine residues in EMI domains of target proteins. Attaches fucose through an O-glycosidic linkage. O-fucosylation of EMI domain-containing proteins may be required for facilitating protein folding and secretion. This Gallus gallus (Chicken) protein is GDP-fucose protein O-fucosyltransferase 3 (FUT10).